A 951-amino-acid chain; its full sequence is Serrate RNA effector molecule homolog (951 aa).

Disordered stretches follow at residues 1-108 (MADS…PRYG), 283-515 (FDRK…KVNP), 644-664 (PLSK…GSGS), and 864-893 (DPKR…GYRP). Basic and acidic residues-rich tracts occupy residues 8–33 (YDRK…ERRP) and 40–49 (GRDEWSERNP). The span at 51–60 (RGGGAGGGGA) shows a compositional bias: gly residues. A Phosphotyrosine modification is found at Tyr-79. Position 81 is a phosphoserine (Ser-81). Positions 92–103 (MRSDWGDGDGRP) are enriched in basic and acidic residues. Thr-299 carries the post-translational modification Phosphothreonine. Residues Ser-302, Ser-328, and Ser-354 each carry the phosphoserine modification. Positions 328–340 (SDDENWDDAEVED) are enriched in acidic residues. Positions 341 to 362 (APPKKPEEEEPKESEPIPEIKQ) are enriched in basic and acidic residues. Residues 363-378 (KQKKEKKKKIKKRKRN) are compositionally biased toward basic residues. The span at 387–396 (SSESESSSSS) shows a compositional bias: low complexity. The span at 405-434 (EKLKAKYDVEDGLRAEQKAEAEKDQAEAAK) shows a compositional bias: basic and acidic residues. Ser-441 carries the post-translational modification Phosphoserine. Over residues 442–487 (PKEEISPEKSAADPEVEGEAKEDGKQAEKSPKSDDEKKQENGDAAK) the composition is skewed to basic and acidic residues. Residues 649 to 664 (SPASDSEATAANGSGS) are compositionally biased toward polar residues.

Belongs to the ARS2 family. In terms of assembly, interacts with cbp20, Dcr-2 and pasha.

It localises to the nucleus. In terms of biological role, acts as a mediator between the cap-binding complex (CBC) and RNA-mediated gene silencing (RNAi). Involved in innate immunity via the short interfering RNAs (siRNAs) processing machinery by restricting the viral RNA production. Also involved microRNA (miRNA)-mediated silencing by contributing to the stability and delivery of primary miRNA transcripts to the primary miRNA processing complex containing drosha and pasha. This chain is Serrate RNA effector molecule homolog (Ars2), found in Drosophila persimilis (Fruit fly).